The sequence spans 474 residues: Dol-P-Glc:Glc(2)Man(9)GlcNAc(2)-PP-Dol alpha-1,2-glucosyltransferase (474 aa).

Residues Met-1 to Gly-6 lie on the Cytoplasmic side of the membrane. The chain crosses the membrane as a helical span at residues Tyr-7–Phe-27. Topologically, residues Ser-28 to Thr-64 are extracellular. A helical membrane pass occupies residues Leu-65–Trp-85. Residues Ser-86 to Arg-97 lie on the Cytoplasmic side of the membrane. A helical membrane pass occupies residues Phe-98–Val-118. Residues Gln-119–Ser-126 lie on the Extracellular side of the membrane. Residues Ser-127–Asn-147 traverse the membrane as a helical segment. Over Phe-148–Tyr-150 the chain is Cytoplasmic. The chain crosses the membrane as a helical span at residues Tyr-151–Asn-171. Topologically, residues His-172–Ser-175 are extracellular. The chain crosses the membrane as a helical span at residues Ala-176–Cys-196. The Cytoplasmic portion of the chain corresponds to Ala-197–Trp-256. The helical transmembrane segment at Pro-257–Val-277 threads the bilayer. Topologically, residues Gly-278 to His-283 are extracellular. Residues Glu-284 to Phe-304 form a helical membrane-spanning segment. Residues Pro-305–Leu-317 lie on the Cytoplasmic side of the membrane. Residues Ser-318 to Val-338 form a helical membrane-spanning segment. The Extracellular segment spans residues Trp-339 to Gln-365. Residues Arg-366–Ala-386 traverse the membrane as a helical segment. Topologically, residues Asp-387–Lys-392 are cytoplasmic. A helical membrane pass occupies residues Ser-393 to Leu-413. Residues Leu-414–Ser-436 lie on the Extracellular side of the membrane. Residues Arg-437–Leu-457 traverse the membrane as a helical segment. Over Asn-458 to Met-473 the chain is Cytoplasmic.

Belongs to the ALG10 glucosyltransferase family. Interacts with KCNH1; may regulate KCNH1, possibly by regulating its N-glycosylation. Interacts with KCNH2; may reduce KCNH2 sensitivity to classic proarrhythmic drug blockade, possibly by regulating its N-glycosylation.

It localises to the endoplasmic reticulum membrane. The enzyme catalyses an alpha-D-Glc-(1-&gt;3)-alpha-D-Glc-(1-&gt;3)-alpha-D-Man-(1-&gt;2)-alpha-D-Man-(1-&gt;2)-alpha-D-Man-(1-&gt;3)-[alpha-D-Man-(1-&gt;2)-alpha-D-Man-(1-&gt;3)-[alpha-D-Man-(1-&gt;2)-alpha-D-Man-(1-&gt;6)]-alpha-D-Man-(1-&gt;6)]-beta-D-Man-(1-&gt;4)-beta-D-GlcNAc-(1-&gt;4)-alpha-D-GlcNAc-diphospho-di-trans,poly-cis-dolichol + a di-trans,poly-cis-dolichyl beta-D-glucosyl phosphate = a alpha-D-Glc-(1-&gt;2)-alpha-D-Glc-(1-&gt;3)-alpha-D-Glc-(1-&gt;3)-alpha-D-Man-(1-&gt;2)-alpha-D-Man-(1-&gt;2)-alpha-D-Man-(1-&gt;3)-[alpha-D-Man-(1-&gt;2)-alpha-D-Man-(1-&gt;3)-[alpha-D-Man-(1-&gt;2)-alpha-D-Man-(1-&gt;6)]-alpha-D-Man-(1-&gt;6)]-beta-D-Man-(1-&gt;4)-beta-D-GlcNAc-(1-&gt;4)-alpha-D-GlcNAc-diphospho-di-trans,poly-cis-dolichol + a di-trans,poly-cis-dolichyl phosphate + H(+). The protein operates within protein modification; protein glycosylation. Functionally, dol-P-Glc:Glc(2)Man(9)GlcNAc(2)-PP-Dol alpha-1,2-glucosyltransferase that operates in the biosynthetic pathway of dolichol-linked oligosaccharides, the glycan precursors employed in protein asparagine (N)-glycosylation. The assembly of dolichol-linked oligosaccharides begins on the cytosolic side of the endoplasmic reticulum membrane and finishes in its lumen. The sequential addition of sugars to dolichol pyrophosphate produces dolichol-linked oligosaccharides containing fourteen sugars, including two GlcNAcs, nine mannoses and three glucoses. Once assembled, the oligosaccharide is transferred from the lipid to nascent proteins by oligosaccharyltransferases. In the lumen of the endoplasmic reticulum, adds the third and last glucose residue from dolichyl phosphate glucose (Dol-P-Glc) onto the lipid-linked oligosaccharide intermediate Glc(2)Man(9)GlcNAc(2)-PP-Dol to produce Glc(3)Man(9)GlcNAc(2)-PP-Dol. The polypeptide is Dol-P-Glc:Glc(2)Man(9)GlcNAc(2)-PP-Dol alpha-1,2-glucosyltransferase (Mus musculus (Mouse)).